The following is a 694-amino-acid chain: Elongation factor G 1 (694 aa).

The tr-type G domain occupies 5 to 280 (SRYRNIGIFA…AVVDYLPDPT (276 aa)). GTP-binding positions include 14 to 21 (AHVDAGKT), 78 to 82 (DTPGH), and 132 to 135 (NKLD).

Belongs to the TRAFAC class translation factor GTPase superfamily. Classic translation factor GTPase family. EF-G/EF-2 subfamily.

It is found in the cytoplasm. Functionally, catalyzes the GTP-dependent ribosomal translocation step during translation elongation. During this step, the ribosome changes from the pre-translocational (PRE) to the post-translocational (POST) state as the newly formed A-site-bound peptidyl-tRNA and P-site-bound deacylated tRNA move to the P and E sites, respectively. Catalyzes the coordinated movement of the two tRNA molecules, the mRNA and conformational changes in the ribosome. This Methylococcus capsulatus (strain ATCC 33009 / NCIMB 11132 / Bath) protein is Elongation factor G 1.